The following is a 794-amino-acid chain: Interphotoreceptor matrix proteoglycan 1 (794 aa).

Residues M1–G20 form the signal peptide. The span at M202–P213 shows a compositional bias: polar residues. Disordered regions lie at residues M202 to T221, K314 to T355, and S413 to S449. In terms of domain architecture, SEA 1 spans L236–S357. The span at N332–E351 shows a compositional bias: basic and acidic residues. T425 and T439 each carry an O-linked (GalNAc...) threonine glycan. A glycan (O-linked (GalNAc...) serine) is linked at S443. T448 and T450 each carry an O-linked (GalNAc...) threonine glycan. Residues R579–Q692 enclose the SEA 2 domain. A glycan (N-linked (GlcNAc...) asparagine) is linked at N624. The short motif at K629–R637 is the Heparin- and hyaluronan-binding element. N656 is a glycosylation site (N-linked (GlcNAc...) asparagine).

Post-translationally, highly glycosylated (N- and O-linked carbohydrates and sialic acid).

The protein resides in the cell projection. It localises to the cilium. It is found in the photoreceptor outer segment. The protein localises to the secreted. Its subcellular location is the extracellular space. The protein resides in the extracellular matrix. It localises to the interphotoreceptor matrix. It is found in the photoreceptor inner segment. Functionally, chondroitin sulfate-, heparin- and hyaluronan-binding protein. May serve to form a basic macromolecular scaffold comprising the insoluble interphotoreceptor matrix. This chain is Interphotoreceptor matrix proteoglycan 1 (IMPG1), found in Bos taurus (Bovine).